Reading from the N-terminus, the 637-residue chain is tRNA uridine 5-carboxymethylaminomethyl modification enzyme MnmG (637 aa).

Residue 14-19 (GAGHAG) coordinates FAD. NAD(+) is bound at residue 279-293 (GPRYCPSIEDKVVRF).

It belongs to the MnmG family. In terms of assembly, homodimer. Heterotetramer of two MnmE and two MnmG subunits. It depends on FAD as a cofactor.

It is found in the cytoplasm. NAD-binding protein involved in the addition of a carboxymethylaminomethyl (cmnm) group at the wobble position (U34) of certain tRNAs, forming tRNA-cmnm(5)s(2)U34. This chain is tRNA uridine 5-carboxymethylaminomethyl modification enzyme MnmG, found in Desulfitobacterium hafniense (strain Y51).